Reading from the N-terminus, the 254-residue chain is Probable transcriptional regulatory protein Cyan7425_4347 (254 aa).

Belongs to the TACO1 family.

The protein localises to the cytoplasm. The protein is Probable transcriptional regulatory protein Cyan7425_4347 of Cyanothece sp. (strain PCC 7425 / ATCC 29141).